Consider the following 888-residue polypeptide: C2H2 zinc finger transcription factor sltA (888 aa).

Disordered stretches follow at residues M1–P78, I132–N176, and R388–P407. Composition is skewed to polar residues over residues P23–E32, G167–N176, and R388–P397. 2 consecutive C2H2-type zinc fingers follow at residues Q500–H522 and Y561–H586. The interval D589 to P663 is disordered. Residues K602–E632 are compositionally biased toward polar residues.

It is found in the nucleus. Transcription factor that contributes to azole resistance by coregulating the expression of the drug target erg11A and the drug efflux pump mdr1. Binds to the 5'-AGGCA-3' motif in the promoters of ergosterol biosynthesis and drug pump genes to regulate their expression. Is able to interact with the promoters of sltA, sltB, erg11A, erg13A, erg24A, mdr1, abcE and mfsC. Involved in antifungal drug resistance to azoles, terbinafine, and simvastatin but not amphotericin B or caspofungin. This chain is C2H2 zinc finger transcription factor sltA, found in Aspergillus fumigatus (strain CBS 144.89 / FGSC A1163 / CEA10) (Neosartorya fumigata).